A 302-amino-acid chain; its full sequence is Pyridoxal 5'-phosphate synthase subunit PdxS (302 aa).

Residue Asp32 coordinates D-ribose 5-phosphate. Residue Lys89 is the Schiff-base intermediate with D-ribose 5-phosphate of the active site. Gly161 is a D-ribose 5-phosphate binding site. Arg173 contacts D-glyceraldehyde 3-phosphate. D-ribose 5-phosphate contacts are provided by residues Gly222 and 243–244 (GS). The tract at residues 275–302 (IAKNPGKGMKGQANADLDEEEQLQGRGV) is disordered.

Belongs to the PdxS/SNZ family. As to quaternary structure, in the presence of PdxT, forms a dodecamer of heterodimers.

It catalyses the reaction aldehydo-D-ribose 5-phosphate + D-glyceraldehyde 3-phosphate + L-glutamine = pyridoxal 5'-phosphate + L-glutamate + phosphate + 3 H2O + H(+). Its pathway is cofactor biosynthesis; pyridoxal 5'-phosphate biosynthesis. In terms of biological role, catalyzes the formation of pyridoxal 5'-phosphate from ribose 5-phosphate (RBP), glyceraldehyde 3-phosphate (G3P) and ammonia. The ammonia is provided by the PdxT subunit. Can also use ribulose 5-phosphate and dihydroxyacetone phosphate as substrates, resulting from enzyme-catalyzed isomerization of RBP and G3P, respectively. The sequence is that of Pyridoxal 5'-phosphate synthase subunit PdxS from Haloarcula marismortui (strain ATCC 43049 / DSM 3752 / JCM 8966 / VKM B-1809) (Halobacterium marismortui).